The chain runs to 427 residues: Light-independent protochlorophyllide reductase subunit N (427 aa).

3 residues coordinate [4Fe-4S] cluster: Cys-29, Cys-54, and Cys-115.

The protein belongs to the BchN/ChlN family. Protochlorophyllide reductase is composed of three subunits; BchL, BchN and BchB. Forms a heterotetramer of two BchB and two BchN subunits. [4Fe-4S] cluster serves as cofactor.

The enzyme catalyses chlorophyllide a + oxidized 2[4Fe-4S]-[ferredoxin] + 2 ADP + 2 phosphate = protochlorophyllide a + reduced 2[4Fe-4S]-[ferredoxin] + 2 ATP + 2 H2O. It participates in porphyrin-containing compound metabolism; bacteriochlorophyll biosynthesis (light-independent). In terms of biological role, component of the dark-operative protochlorophyllide reductase (DPOR) that uses Mg-ATP and reduced ferredoxin to reduce ring D of protochlorophyllide (Pchlide) to form chlorophyllide a (Chlide). This reaction is light-independent. The NB-protein (BchN-BchB) is the catalytic component of the complex. In Bradyrhizobium sp. (strain ORS 278), this protein is Light-independent protochlorophyllide reductase subunit N.